A 70-amino-acid chain; its full sequence is Small ribosomal subunit protein bS21 (70 aa).

This sequence belongs to the bacterial ribosomal protein bS21 family.

This Chromobacterium violaceum (strain ATCC 12472 / DSM 30191 / JCM 1249 / CCUG 213 / NBRC 12614 / NCIMB 9131 / NCTC 9757 / MK) protein is Small ribosomal subunit protein bS21.